Reading from the N-terminus, the 134-residue chain is Small ribosomal subunit protein uS8 (134 aa).

The protein belongs to the universal ribosomal protein uS8 family. Part of the 30S ribosomal subunit. Contacts proteins S5 and S12.

Its function is as follows. One of the primary rRNA binding proteins, it binds directly to 16S rRNA central domain where it helps coordinate assembly of the platform of the 30S subunit. This is Small ribosomal subunit protein uS8 from Thermosipho africanus (strain TCF52B).